The sequence spans 600 residues: Arginine--tRNA ligase (600 aa).

The 'HIGH' region motif lies at 123-133 (PNVAKPMHVGH).

The protein belongs to the class-I aminoacyl-tRNA synthetase family. Monomer.

It is found in the cytoplasm. It carries out the reaction tRNA(Arg) + L-arginine + ATP = L-arginyl-tRNA(Arg) + AMP + diphosphate. This Caulobacter vibrioides (strain NA1000 / CB15N) (Caulobacter crescentus) protein is Arginine--tRNA ligase.